The primary structure comprises 183 residues: Ribonuclease H (183 aa).

The RNase H type-1 domain maps to 2–151 (SQARFIAFSD…VDQLAQAAAR (150 aa)). Asp-11, Glu-57, Asp-79, and Asp-143 together coordinate Mg(2+).

Belongs to the RNase H family. As to quaternary structure, monomer. Mg(2+) is required as a cofactor.

Its subcellular location is the cytoplasm. It catalyses the reaction Endonucleolytic cleavage to 5'-phosphomonoester.. Functionally, endonuclease that specifically degrades the RNA of RNA-DNA hybrids. This is Ribonuclease H from Anaeromyxobacter dehalogenans (strain 2CP-C).